Here is a 612-residue protein sequence, read N- to C-terminus: Probable serine/threonine-protein kinase WNK4 (612 aa).

A Protein kinase domain is found at 25 to 282 (IRYNEVLGRG…AKELLQDPFL (258 aa)). Residues 105–108 (TELF) and Lys155 each bind ATP. Residue Asp172 is the Proton acceptor of the active site.

Belongs to the protein kinase superfamily. Ser/Thr protein kinase family. WNK subfamily.

It catalyses the reaction L-seryl-[protein] + ATP = O-phospho-L-seryl-[protein] + ADP + H(+). It carries out the reaction L-threonyl-[protein] + ATP = O-phospho-L-threonyl-[protein] + ADP + H(+). This Oryza sativa subsp. japonica (Rice) protein is Probable serine/threonine-protein kinase WNK4 (WNK4).